Here is a 328-residue protein sequence, read N- to C-terminus: Glyoxylate reductase/hydroxypyruvate reductase (328 aa).

Ser36 bears the Phosphoserine mark. Val83–Gly84 lines the substrate pocket. NADP(+) is bound by residues Gly162–Ile164, Arg185–Arg188, Ser217, and Ile243. Substrate is bound by residues Arg245, Asp269, and His293–Ser296. Catalysis depends on His293, which acts as the Proton donor. An NADP(+)-binding site is contributed by Gly295. Thr298 carries the post-translational modification Phosphothreonine.

This sequence belongs to the D-isomer specific 2-hydroxyacid dehydrogenase family. As to quaternary structure, homodimer.

The enzyme catalyses glycolate + NADP(+) = glyoxylate + NADPH + H(+). It catalyses the reaction (R)-glycerate + NAD(+) = 3-hydroxypyruvate + NADH + H(+). It carries out the reaction (R)-glycerate + NADP(+) = 3-hydroxypyruvate + NADPH + H(+). Its function is as follows. Enzyme with hydroxy-pyruvate reductase, glyoxylate reductase and D-glycerate dehydrogenase enzymatic activities. Reduces hydroxypyruvate to D-glycerate, glyoxylate to glycolate oxidizes D-glycerate to hydroxypyruvate. This Mus musculus (Mouse) protein is Glyoxylate reductase/hydroxypyruvate reductase (Grhpr).